Consider the following 334-residue polypeptide: Ketol-acid reductoisomerase (NADP(+)) (334 aa).

The KARI N-terminal Rossmann domain occupies 2–182 (PKMYYEKDTD…GGARAGVLET (181 aa)). Residues 25–28 (YGSQ), Ser51, Ser53, and 83–86 (DEKQ) contribute to the NADP(+) site. Residue His108 is part of the active site. Position 134 (Gly134) interacts with NADP(+). Residues 183-328 (TFKDETETDL…KELRGMMSWI (146 aa)) form the KARI C-terminal knotted domain. The Mg(2+) site is built by Asp191, Glu195, Glu227, and Glu231. Ser252 is a substrate binding site.

Belongs to the ketol-acid reductoisomerase family. Mg(2+) is required as a cofactor.

It carries out the reaction (2R)-2,3-dihydroxy-3-methylbutanoate + NADP(+) = (2S)-2-acetolactate + NADPH + H(+). The enzyme catalyses (2R,3R)-2,3-dihydroxy-3-methylpentanoate + NADP(+) = (S)-2-ethyl-2-hydroxy-3-oxobutanoate + NADPH + H(+). Its pathway is amino-acid biosynthesis; L-isoleucine biosynthesis; L-isoleucine from 2-oxobutanoate: step 2/4. The protein operates within amino-acid biosynthesis; L-valine biosynthesis; L-valine from pyruvate: step 2/4. In terms of biological role, involved in the biosynthesis of branched-chain amino acids (BCAA). Catalyzes an alkyl-migration followed by a ketol-acid reduction of (S)-2-acetolactate (S2AL) to yield (R)-2,3-dihydroxy-isovalerate. In the isomerase reaction, S2AL is rearranged via a Mg-dependent methyl migration to produce 3-hydroxy-3-methyl-2-ketobutyrate (HMKB). In the reductase reaction, this 2-ketoacid undergoes a metal-dependent reduction by NADPH to yield (R)-2,3-dihydroxy-isovalerate. This chain is Ketol-acid reductoisomerase (NADP(+)), found in Clostridium beijerinckii (strain ATCC 51743 / NCIMB 8052) (Clostridium acetobutylicum).